Reading from the N-terminus, the 229-residue chain is Octanoyltransferase (229 aa).

Residues 45–220 enclose the BPL/LPL catalytic domain; it reads ATAVDELWVV…ELARQFCFVL (176 aa). Substrate is bound by residues 84-91, 151-153, and 164-166; these read RGGQVTYH, ALG, and GVA. The Acyl-thioester intermediate role is filled by Cys182.

It belongs to the LipB family.

It is found in the cytoplasm. It catalyses the reaction octanoyl-[ACP] + L-lysyl-[protein] = N(6)-octanoyl-L-lysyl-[protein] + holo-[ACP] + H(+). Its pathway is protein modification; protein lipoylation via endogenous pathway; protein N(6)-(lipoyl)lysine from octanoyl-[acyl-carrier-protein]: step 1/2. In terms of biological role, catalyzes the transfer of endogenously produced octanoic acid from octanoyl-acyl-carrier-protein onto the lipoyl domains of lipoate-dependent enzymes. Lipoyl-ACP can also act as a substrate although octanoyl-ACP is likely to be the physiological substrate. This chain is Octanoyltransferase, found in Xylella fastidiosa (strain 9a5c).